Here is a 347-residue protein sequence, read N- to C-terminus: Protein-glutamate methylesterase/protein-glutamine glutaminase (347 aa).

The Response regulatory domain occupies 6-123; sequence RVLVVDDSPT…HRPFGDLAEK (118 aa). Asp-57 carries the 4-aspartylphosphate modification. The 193-residue stretch at 150 to 342 folds into the CheB-type methylesterase domain; sequence FRVGRKIVAI…EEILKLTAAR (193 aa). Catalysis depends on residues Ser-162, His-188, and Asp-284.

Belongs to the CheB family. Phosphorylated by CheA. Phosphorylation of the N-terminal regulatory domain activates the methylesterase activity.

It is found in the cytoplasm. It catalyses the reaction [protein]-L-glutamate 5-O-methyl ester + H2O = L-glutamyl-[protein] + methanol + H(+). The enzyme catalyses L-glutaminyl-[protein] + H2O = L-glutamyl-[protein] + NH4(+). Its function is as follows. Involved in chemotaxis. Part of a chemotaxis signal transduction system that modulates chemotaxis in response to various stimuli. Catalyzes the demethylation of specific methylglutamate residues introduced into the chemoreceptors (methyl-accepting chemotaxis proteins or MCP) by CheR. Also mediates the irreversible deamidation of specific glutamine residues to glutamic acid. In Rhizobium etli (strain ATCC 51251 / DSM 11541 / JCM 21823 / NBRC 15573 / CFN 42), this protein is Protein-glutamate methylesterase/protein-glutamine glutaminase.